The following is a 116-amino-acid chain: U16-barytoxin-Tl1f (116 aa).

The first 20 residues, 1–20 (MKTIIVFLSLLVLATKFGDA), serve as a signal peptide directing secretion. Residues 21–74 (NEGVNQEQMKEVIQNEFREDFLNEMAPMSLLQQLEAIESTLLEKEADRNSRQKR) constitute a propeptide that is removed on maturation. Cystine bridges form between C75/C90, C82/C95, and C89/C110. N-linked (GlcNAc...) asparagine glycosylation is present at N85.

Belongs to the neurotoxin 14 (magi-1) family. 06 (ICK-Trit) subfamily. As to expression, expressed by the venom gland.

It is found in the secreted. Its function is as follows. Ion channel inhibitor. The chain is U16-barytoxin-Tl1f from Trittame loki (Brush-footed trapdoor spider).